Consider the following 253-residue polypeptide: Ribonuclease 3 (253 aa).

The region spanning 29–157 (VDELQKTIGH…MLGAVFLDAG (129 aa)) is the RNase III domain. E70 is a binding site for Mg(2+). The active site involves D74. 2 residues coordinate Mg(2+): D143 and E146. E146 is an active-site residue. The 70-residue stretch at 184–253 (DYKSQLQELT…AARAVATLDK (70 aa)) folds into the DRBM domain.

This sequence belongs to the ribonuclease III family. In terms of assembly, homodimer. It depends on Mg(2+) as a cofactor.

The protein localises to the cytoplasm. It carries out the reaction Endonucleolytic cleavage to 5'-phosphomonoester.. Digests double-stranded RNA. Involved in the processing of primary rRNA transcript to yield the immediate precursors to the large and small rRNAs (23S and 16S). Processes some mRNAs, and tRNAs when they are encoded in the rRNA operon. Processes pre-crRNA and tracrRNA of type II CRISPR loci if present in the organism. The protein is Ribonuclease 3 of Nitratidesulfovibrio vulgaris (strain ATCC 29579 / DSM 644 / CCUG 34227 / NCIMB 8303 / VKM B-1760 / Hildenborough) (Desulfovibrio vulgaris).